The following is a 963-amino-acid chain: Isoleucine--tRNA ligase (963 aa).

A 'HIGH' region motif is present at residues 66–76 (PYANGDIHIGH). Glutamate 596 is a binding site for L-isoleucyl-5'-AMP. The 'KMSKS' region motif lies at 637–641 (KMSKS). Position 640 (lysine 640) interacts with ATP. Zn(2+) is bound by residues cysteine 926, cysteine 929, cysteine 946, and cysteine 949.

It belongs to the class-I aminoacyl-tRNA synthetase family. IleS type 1 subfamily. In terms of assembly, monomer. Zn(2+) serves as cofactor.

It is found in the cytoplasm. The catalysed reaction is tRNA(Ile) + L-isoleucine + ATP = L-isoleucyl-tRNA(Ile) + AMP + diphosphate. Functionally, catalyzes the attachment of isoleucine to tRNA(Ile). As IleRS can inadvertently accommodate and process structurally similar amino acids such as valine, to avoid such errors it has two additional distinct tRNA(Ile)-dependent editing activities. One activity is designated as 'pretransfer' editing and involves the hydrolysis of activated Val-AMP. The other activity is designated 'posttransfer' editing and involves deacylation of mischarged Val-tRNA(Ile). The polypeptide is Isoleucine--tRNA ligase (Cupriavidus pinatubonensis (strain JMP 134 / LMG 1197) (Cupriavidus necator (strain JMP 134))).